The sequence spans 1085 residues: Phosphorylase b kinase regulatory subunit beta (1085 aa).

3 positions are modified to phosphoserine: Ser10, Ser19, and Ser693. Calmodulin-binding stretches follow at residues 760 to 787 (RVYR…VVDS) and 912 to 943 (SGRC…ILER). A lipid anchor (S-farnesyl cysteine) is attached at Cys1082.

This sequence belongs to the phosphorylase b kinase regulatory chain family. Hexadecamer of 4 heterotetramers, each composed of alpha, beta, gamma, and delta subunits. Alpha (PHKA1 or PHKA2) and beta (PHKB) are regulatory subunits, gamma (PHKG1 or PHKG2) is the catalytic subunit, and delta is calmodulin. In terms of processing, although the final Cys may be farnesylated, the terminal tripeptide is probably not removed, and the C-terminus is not methylated.

It localises to the cell membrane. Its pathway is glycan biosynthesis; glycogen metabolism. By phosphorylation of various serine residues. Functionally, phosphorylase b kinase catalyzes the phosphorylation of serine in certain substrates, including troponin I. The beta chain acts as a regulatory unit and modulates the activity of the holoenzyme in response to phosphorylation. This chain is Phosphorylase b kinase regulatory subunit beta (Phkb), found in Mus musculus (Mouse).